We begin with the raw amino-acid sequence, 253 residues long: uncharacterized protein (253 aa).

This sequence belongs to the methyltransferase superfamily.

This is an uncharacterized protein from Mycobacterium avium (strain 104).